Consider the following 830-residue polypeptide: Prolactin receptor (830 aa).

A signal peptide spans 1 to 23; that stretch reads MKQKLRSSVQIILLFALTAVGLT. Residues 24–439 are Extracellular-facing; the sequence is GQSYPGKPKI…QIPTDFRIKD (416 aa). 4 Fibronectin type-III domains span residues 30–128, 129–228, 231–331, and 333–434; these read KPKI…VQPD, APVN…IPNG, PPEK…IVQT, and PPVN…IPTD. A disulfide bridge links C36 with C46. An N-linked (GlcNAc...) asparagine glycan is attached at N59. C75 and C86 form a disulfide bridge. Residues N91, N100, N112, N132, N263, N304, N316, and N336 are each glycosylated (N-linked (GlcNAc...) asparagine). Zn(2+) is bound by residues D415 and H417. The WSXWS motif motif lies at 420–424; sequence WSEWS. The chain crosses the membrane as a helical span at residues 440-460; the sequence is MVVWIIVGVLSSLICLVMSWT. Residues 461–830 are Cytoplasmic-facing; sequence MVLKGYRMIA…DPSSFIPAFK (370 aa). The short motif at 472 to 480 is the Box 1 motif element; it reads ILPPVPGPK.

This sequence belongs to the type I cytokine receptor family. Type 1 subfamily.

It localises to the membrane. In terms of biological role, this is a receptor for the anterior pituitary hormone prolactin. The protein is Prolactin receptor (PRLR) of Columba livia (Rock dove).